A 435-amino-acid polypeptide reads, in one-letter code: Cytokine-dependent hematopoietic cell linker (435 aa).

Residues Tyr69 and Tyr96 each carry the phosphotyrosine; by LYN modification. The tract at residues Lys155 to Asp303 is disordered. Positions Pro160 to Arg165 are mediates interaction with PLCG1; essential for BCR signaling; involved in restoration of BCR-induced calcium response and ERK2 and JNK2 activation in BLNK-deficient cells expressing LAT. The interval Pro178–Pro182 is mediates interaction with LAT, GRB2, and FGR; involved in translocation to the glycolipid-enriched microdomain and restoration of BCR-induced calcium response in BLNK-deficient DT40 cells expressing LAT. The span at Pro226–Tyr249 shows a compositional bias: polar residues. The segment covering Asn290–Asp303 has biased composition (basic and acidic residues). The SH2 domain maps to Trp309–Leu418.

In terms of assembly, when phosphorylated, interacts with PLCG1, PLCG2, GRB2, VAV and LAT. Associated with a tyrosine-phosphorylated polypeptide (p92) in response to immunoreceptor stimulation. Interacts with LBR and AGO2. Interacts with FGR. Part of a complex consisting of CLNK, SKAP1 and FYB1. Interacts (via SH2 domain) with FYB1; this interaction allows SKAP1 and FYB1 to promote tyrosine phosphorylation of CLNK by LYN. Interacts (via SH2 domain) with MAP4K1. In terms of processing, tyrosine-phosphorylated upon BCR cross-linking. Tyrosine phosphorylation at both Tyr-69 and Tyr-96 are required for BCR-induced calcium response and are essential to restore PLCG2-mediated signaling in BLNK-deficient DT40 cells, but this phosphorylation is dispensable in cells expressing LAT. Interacts with the SH2 domain of PLCG1 via phosphorylated Tyr-96. Tyrosine phosphorylation is increased when complexed with SKAP1 and FYB1. Expressed in T-cells, mast cells, natural killer and natural killer T cells (at protein level). Expressed in cytokine-stimulated hemopoietic cells.

The protein resides in the cytoplasm. Functionally, an adapter protein which plays a role in the regulation of immunoreceptor signaling, including PLC-gamma-mediated B-cell antigen receptor (BCR) signaling and FC-epsilon R1-mediated mast cell degranulation. Together with FGR, it acts as a negative regulator of natural killer cell-activating receptors and inhibits interferon-gamma production. Acts as a positive regulator of both T-cell receptor and natural killer T (NKT) cell receptor signaling in CD4-positive NKT cells. Together with MAP4K1, it enhances CD3-triggered activation of T-cells and subsequent IL2 production. May be involved in tumor necrosis factor induced cell death by promoting reactive oxidative species generation, and MLKL oligomerization, ultimately leading to necrosis. Involved in phosphorylation of LAT. May be involved in high affinity immunoglobulin epsilon receptor signaling in mast cells. The protein is Cytokine-dependent hematopoietic cell linker (Clnk) of Mus musculus (Mouse).